Consider the following 214-residue polypeptide: Large ribosomal subunit protein uL3 (214 aa).

Glutamine 151 carries the N5-methylglutamine modification.

This sequence belongs to the universal ribosomal protein uL3 family. As to quaternary structure, part of the 50S ribosomal subunit. Forms a cluster with proteins L14 and L19. In terms of processing, methylated by PrmB.

In terms of biological role, one of the primary rRNA binding proteins, it binds directly near the 3'-end of the 23S rRNA, where it nucleates assembly of the 50S subunit. The polypeptide is Large ribosomal subunit protein uL3 (Magnetococcus marinus (strain ATCC BAA-1437 / JCM 17883 / MC-1)).